The primary structure comprises 216 residues: Sugar transporter SWEET1 (216 aa).

7 helical membrane-spanning segments follow: residues 3-23 (WMWLLSGACIVFTLGMFSSGL), 36-56 (ENIQYLPFLTTDLNNLGWFYY), 65-85 (LMIVNVIGASLQSLYMGAYLL), 96-116 (QVLVSLGVLLLGYCYFTLWIL), 125-145 (LGLFCSVFTISMYLSPLADLA), 157-177 (SFPLTVATFLTSSSWVLYGLV), and 181-201 (LYITVPNFPGIVTSLVRFWLF). The 85-residue stretch at 6–90 (LLSGACIVFT…GAYLLYSPER (85 aa)) folds into the MtN3/slv 1 domain. One can recognise a MtN3/slv 2 domain in the interval 124–206 (QLGLFCSVFT…RFWLFSQFPP (83 aa)).

It belongs to the SWEET sugar transporter family.

It is found in the golgi apparatus membrane. It localises to the cell membrane. Its function is as follows. Mediates sugar transport across membranes. The protein is Sugar transporter SWEET1 (slc50a1) of Xenopus laevis (African clawed frog).